We begin with the raw amino-acid sequence, 178 residues long: ATP-dependent protease subunit HslV (178 aa).

Thr8 is a catalytic residue. Residues Gly163, Cys166, and Thr169 each coordinate Na(+).

This sequence belongs to the peptidase T1B family. HslV subfamily. A double ring-shaped homohexamer of HslV is capped on each side by a ring-shaped HslU homohexamer. The assembly of the HslU/HslV complex is dependent on binding of ATP.

It is found in the cytoplasm. It carries out the reaction ATP-dependent cleavage of peptide bonds with broad specificity.. Its activity is regulated as follows. Allosterically activated by HslU binding. Functionally, protease subunit of a proteasome-like degradation complex believed to be a general protein degrading machinery. The sequence is that of ATP-dependent protease subunit HslV from Xylella fastidiosa (strain 9a5c).